The sequence spans 449 residues: Alginate biosynthesis transcriptional regulatory protein AlgB (449 aa).

The region spanning 10–124 (RILLVDDESA…QLRLAAAKQL (115 aa)) is the Response regulatory domain. At aspartate 59 the chain carries 4-aspartylphosphate. The region spanning 147–376 (LESHSPAMAA…LRNVIERASI (230 aa)) is the Sigma-54 factor interaction domain. ATP is bound by residues 175-182 (GESGSGKG) and 238-247 (ADGGTLFLDE). The segment at residues 426–445 (LDQAAKTLGIDASTLYRKRK) is a DNA-binding region (H-T-H motif).

Phosphorylated by KinB.

It functions in the pathway glycan biosynthesis; alginate biosynthesis [regulation]. Member of the two-component regulatory system AlgB/KinB involved in regulation of alginate biosynthesis genes. Positive regulator of the alginate biosynthetic gene AlgD. The sequence is that of Alginate biosynthesis transcriptional regulatory protein AlgB (algB) from Pseudomonas aeruginosa (strain ATCC 15692 / DSM 22644 / CIP 104116 / JCM 14847 / LMG 12228 / 1C / PRS 101 / PAO1).